The chain runs to 494 residues: Tripartite motif-containing protein 5 (494 aa).

Residue Ala-2 is modified to N-acetylalanine. The RING-type zinc finger occupies 15-59 (CPICLELLTEPLSLDCGHSFCQACITANHKESTPHQGERSCPLCR). Position 86 is a phosphoserine (Ser-86). The B box-type zinc finger occupies 91-132 (QKVGHCARHGEKLLLFCEQDGNVICWLCERSQEHRGHHTFLV). 4 residues coordinate Zn(2+): Cys-96, His-99, Cys-118, and His-124. A coiled-coil region spans residues 131–223 (LVEEVAEKYQ…RLVQSESDMA (93 aa)). The required for interaction with GABARAP and for autophagy stretch occupies residues 186–199 (FKQLRDILDCEESK). Positions 280–494 (PDLKGMLQAF…LPMTLCSPSS (215 aa)) constitute a B30.2/SPRY domain.

Belongs to the TRIM/RBCC family. As to quaternary structure, can form homodimers and homotrimers. In addition to lower-order dimerization, also exhibits a higher-order multimerization and both low- and high-order multimerizations are essential for its restriction activity. Interacts with BTBD1 and BTBD2. Interacts with PSMC4, PSMC5, PSMD7 and HSPA8/HSC70. Interacts (via B30.2/SPRY domain) with HSPA1A/B. Interacts with PSMC2, MAP3K7/TAK1, TAB2 and TAB3. Interacts with SQSTM1. Interacts with TRIM6 and TRIM34. Interacts with ULK1 (phosphorylated form), GABARAP, GABARAPL1, GABARAPL2, MAP1LC3A, MAP1LC3C and BECN1. Degraded in a proteasome-independent fashion in the absence of viral infection but in a proteasome-dependent fashion following exposure to restriction sensitive virus. Post-translationally, autoubiquitinated in a RING finger- and UBE2D2-dependent manner. Monoubiquitinated by TRIM21. Deubiquitinated by Yersinia YopJ. Ubiquitination may not lead to proteasomal degradation.

It is found in the cytoplasm. The protein localises to the nucleus. It catalyses the reaction S-ubiquitinyl-[E2 ubiquitin-conjugating enzyme]-L-cysteine + [acceptor protein]-L-lysine = [E2 ubiquitin-conjugating enzyme]-L-cysteine + N(6)-ubiquitinyl-[acceptor protein]-L-lysine.. It participates in protein modification; protein ubiquitination. Capsid-specific restriction factor that prevents infection from non-host-adapted retroviruses. Blocks viral replication early in the life cycle, after viral entry but before reverse transcription. In addition to acting as a capsid-specific restriction factor, also acts as a pattern recognition receptor that activates innate immune signaling in response to the retroviral capsid lattice. Binding to the viral capsid triggers its E3 ubiquitin ligase activity, and in concert with the heterodimeric ubiquitin conjugating enzyme complex UBE2V1-UBE2N (also known as UBC13-UEV1A complex) generates 'Lys-63'-linked polyubiquitin chains, which in turn are catalysts in the autophosphorylation of the MAP3K7/TAK1 complex (includes TAK1, TAB2, and TAB3). Activation of the MAP3K7/TAK1 complex by autophosphorylation results in the induction and expression of NF-kappa-B and MAPK-responsive inflammatory genes, thereby leading to an innate immune response in the infected cell. Plays a role in regulating autophagy through activation of autophagy regulator BECN1 by causing its dissociation from its inhibitors BCL2 and TAB2. The chain is Tripartite motif-containing protein 5 (TRIM5) from Saguinus oedipus (Cotton-top tamarin).